We begin with the raw amino-acid sequence, 175 residues long: Cytochrome c homolog (175 aa).

Topologically, residues 1-8 (MTGKELNK) are cytoplasmic. The chain crosses the membrane as a helical; Signal-anchor span at residues 9-29 (IVAAILFASLIAMIVRFVANI). Residues 30–175 (LYKPNLQVLN…LFLKNYVHDK (146 aa)) are Periplasmic-facing. The heme c site is built by Cys84, Cys87, His88, and Met150.

This sequence belongs to the cytochrome c family. In terms of processing, binds 1 heme c group covalently per subunit.

Its subcellular location is the cell membrane. Functionally, may be involved in electron transfer from bc1 complex to aa3. This is Cytochrome c homolog (cycM) from Rickettsia typhi (strain ATCC VR-144 / Wilmington).